Consider the following 246-residue polypeptide: Probable transcriptional regulatory protein ASA_2843 (246 aa).

This sequence belongs to the TACO1 family.

The protein localises to the cytoplasm. The sequence is that of Probable transcriptional regulatory protein ASA_2843 from Aeromonas salmonicida (strain A449).